Here is a 355-residue protein sequence, read N- to C-terminus: UDP-N-acetylglucosamine--N-acetylmuramyl-(pentapeptide) pyrophosphoryl-undecaprenol N-acetylglucosamine transferase (355 aa).

UDP-N-acetyl-alpha-D-glucosamine is bound by residues 14 to 16 (TGG), asparagine 126, arginine 162, serine 190, isoleucine 244, and glutamine 289.

It belongs to the glycosyltransferase 28 family. MurG subfamily.

It is found in the cell inner membrane. It carries out the reaction di-trans,octa-cis-undecaprenyl diphospho-N-acetyl-alpha-D-muramoyl-L-alanyl-D-glutamyl-meso-2,6-diaminopimeloyl-D-alanyl-D-alanine + UDP-N-acetyl-alpha-D-glucosamine = di-trans,octa-cis-undecaprenyl diphospho-[N-acetyl-alpha-D-glucosaminyl-(1-&gt;4)]-N-acetyl-alpha-D-muramoyl-L-alanyl-D-glutamyl-meso-2,6-diaminopimeloyl-D-alanyl-D-alanine + UDP + H(+). It functions in the pathway cell wall biogenesis; peptidoglycan biosynthesis. In terms of biological role, cell wall formation. Catalyzes the transfer of a GlcNAc subunit on undecaprenyl-pyrophosphoryl-MurNAc-pentapeptide (lipid intermediate I) to form undecaprenyl-pyrophosphoryl-MurNAc-(pentapeptide)GlcNAc (lipid intermediate II). The protein is UDP-N-acetylglucosamine--N-acetylmuramyl-(pentapeptide) pyrophosphoryl-undecaprenol N-acetylglucosamine transferase of Paracidovorax citrulli (strain AAC00-1) (Acidovorax citrulli).